We begin with the raw amino-acid sequence, 364 residues long: Oxidized low-density lipoprotein receptor 1 (364 aa).

Positions 1 to 21 (MAFDDKMKPVNGQPDQKSCGK) are disordered. The Cytoplasmic portion of the chain corresponds to 1–31 (MAFDDKMKPVNGQPDQKSCGKKPKGLHLLSS). Residues 32 to 54 (TWWCPAAVTLAILCLVLSVTLIV) form a helical; Signal-anchor for type II membrane protein membrane-spanning segment. S-palmitoyl cysteine attachment occurs at residues cysteine 35 and cysteine 45. Residues 55–242 (QQTQLLQVSD…GPCPQDWIWH (188 aa)) are neck. At 55–364 (QQTQLLQVSD…QKKANLLLTQ (310 aa)) the chain is on the extracellular side. N-linked (GlcNAc...) asparagine glycosylation is found at asparagine 72, asparagine 92, and asparagine 138. Residues 83–233 (QMSAQKKAEN…ALQRAANSSG (151 aa)) are a coiled coil. 3 tandem repeats follow at residues 96–141 (ESKR…NASE), 142–187 (ESKW…KYSE), and 188–233 (ESQR…NSSG). 3 cysteine pairs are disulfide-bonded: cysteine 235-cysteine 246, cysteine 262-cysteine 354, and cysteine 333-cysteine 346. The C-type lectin domain maps to 242–355 (HKENCYLFHG…CILTAFSICQ (114 aa)).

As to quaternary structure, homodimer; disulfide-linked. May form a hexamer composed of 3 homodimers. Interacts with HSP70. In terms of processing, N-glycosylated. Predominantly expressed in lung and at lower level in kidney. Expressed in macrophages but not in vascular smooth muscle cells.

The protein localises to the cell membrane. The protein resides in the membrane raft. It is found in the secreted. Functionally, receptor that mediates the recognition, internalization and degradation of oxidatively modified low density lipoprotein (oxLDL) by vascular endothelial cells. OxLDL is a marker of atherosclerosis that induces vascular endothelial cell activation and dysfunction, resulting in pro-inflammatory responses, pro-oxidative conditions and apoptosis. Its association with oxLDL induces the activation of NF-kappa-B through an increased production of intracellular reactive oxygen and a variety of pro-atherogenic cellular responses including a reduction of nitric oxide (NO) release, monocyte adhesion and apoptosis. In addition to binding oxLDL, it acts as a receptor for the HSP70 protein involved in antigen cross-presentation to naive T-cells in dendritic cells, thereby participating in cell-mediated antigen cross-presentation. Also involved in inflammatory process, by acting as a leukocyte-adhesion molecule at the vascular interface in endotoxin-induced inflammation. Also acts as a receptor for advanced glycation end (AGE) products, activated platelets, monocytes, apoptotic cells and both Gram-negative and Gram-positive bacteria. The protein is Oxidized low-density lipoprotein receptor 1 (Olr1) of Rattus norvegicus (Rat).